Here is a 120-residue protein sequence, read N- to C-terminus: Large ribosomal subunit protein bL19 (120 aa).

Belongs to the bacterial ribosomal protein bL19 family.

This protein is located at the 30S-50S ribosomal subunit interface and may play a role in the structure and function of the aminoacyl-tRNA binding site. In Microcystis aeruginosa (strain NIES-843 / IAM M-2473), this protein is Large ribosomal subunit protein bL19.